The sequence spans 226 residues: UPF0758 protein GK2618 (226 aa).

The region spanning 104–226 is the MPN domain; sequence VIRCPEDGAK…FISLKEKGYV (123 aa). Zn(2+) is bound by residues H175, H177, and D188. Residues 175-188 carry the JAMM motif motif; sequence HNHPSGDPTPSRED.

The protein belongs to the UPF0758 family.

The sequence is that of UPF0758 protein GK2618 from Geobacillus kaustophilus (strain HTA426).